A 256-amino-acid chain; its full sequence is uncharacterized protein (256 aa).

The signal sequence occupies residues 1 to 24 (MIKRVNKLVLGISLLFLVISITAG). The N-palmitoyl cysteine moiety is linked to residue Cys25. A lipid anchor (S-diacylglycerol cysteine) is attached at Cys25.

It belongs to the staphylococcal tandem lipoprotein family.

The protein localises to the cell membrane. This is an uncharacterized protein from Staphylococcus aureus.